A 268-amino-acid polypeptide reads, in one-letter code: Ribosomal RNA small subunit methyltransferase A (268 aa).

Residues N16, L18, G43, E64, D89, and N110 each coordinate S-adenosyl-L-methionine.

This sequence belongs to the class I-like SAM-binding methyltransferase superfamily. rRNA adenine N(6)-methyltransferase family. RsmA subfamily.

It is found in the cytoplasm. The catalysed reaction is adenosine(1518)/adenosine(1519) in 16S rRNA + 4 S-adenosyl-L-methionine = N(6)-dimethyladenosine(1518)/N(6)-dimethyladenosine(1519) in 16S rRNA + 4 S-adenosyl-L-homocysteine + 4 H(+). Specifically dimethylates two adjacent adenosines (A1518 and A1519) in the loop of a conserved hairpin near the 3'-end of 16S rRNA in the 30S particle. May play a critical role in biogenesis of 30S subunits. This Pseudomonas syringae pv. tomato (strain ATCC BAA-871 / DC3000) protein is Ribosomal RNA small subunit methyltransferase A.